We begin with the raw amino-acid sequence, 476 residues long: 3-isopropylmalate dehydratase large subunit (476 aa).

Residues Cys353, Cys413, and Cys416 each contribute to the [4Fe-4S] cluster site.

Belongs to the aconitase/IPM isomerase family. LeuC type 1 subfamily. In terms of assembly, heterodimer of LeuC and LeuD. [4Fe-4S] cluster is required as a cofactor.

It catalyses the reaction (2R,3S)-3-isopropylmalate = (2S)-2-isopropylmalate. It functions in the pathway amino-acid biosynthesis; L-leucine biosynthesis; L-leucine from 3-methyl-2-oxobutanoate: step 2/4. Functionally, catalyzes the isomerization between 2-isopropylmalate and 3-isopropylmalate, via the formation of 2-isopropylmaleate. The chain is 3-isopropylmalate dehydratase large subunit from Yersinia pseudotuberculosis serotype IB (strain PB1/+).